The chain runs to 429 residues: uncharacterized protein (429 aa).

The next 10 membrane-spanning stretches (helical) occupy residues 26–46 (VALTGAAAVVVLPVITSHDIF), 51–71 (TGIDWDVIFLLVGMMIIVGVL), 99–119 (LVLVSALASALLDNVTTVLLI), 135–155 (TSFLMAEVFASNIGGAATLVG), 173–193 (FMLHLTPLVVIVLIALIAVLP), 223–243 (LLVKCGAVLVLVFAAFVAHPV), 278–298 (TLLFFAGLFIMVGALVKTGVV), 311–331 (GNIVATAFLILGVSAPISGII), 361–381 (WWALALGADFGGNLTAIGASA), and 407–427 (VVTAVSIALAAIYLWLRYFVL).

The protein belongs to the CitM (TC 2.A.11) transporter family.

Its subcellular location is the cell membrane. This is an uncharacterized protein from Mycobacterium tuberculosis (strain ATCC 25618 / H37Rv).